A 140-amino-acid polypeptide reads, in one-letter code: Protein E6 (140 aa).

Zinc fingers lie at residues C27–C63 and C100–C136.

Belongs to the papillomaviridae E6 protein family. In terms of assembly, forms homodimers. Interacts with ubiquitin-protein ligase UBE3A/E6-AP; this interaction stimulates UBE3A ubiquitin activity. Interacts with host BAK1.

The protein resides in the host cytoplasm. It localises to the host nucleus. Its function is as follows. Plays a major role in the induction and maintenance of cellular transformation. E6 associates with host UBE3A/E6-AP ubiquitin-protein ligase and modulates its activity. Protects host keratinocytes from apoptosis by mediating the degradation of host BAK1. May also inhibit host immune response. The protein is Protein E6 of Human papillomavirus 65.